Reading from the N-terminus, the 181-residue chain is ADP-ribosylation factor 1-like 2 (181 aa).

Gly-2 carries N-myristoyl glycine lipidation. The segment at 3-16 (NVFGSLFKGLFGKK) is important for the stable binding to the membranes. Residues 24–32 (GLDAAGKTT), 126–129 (NKQD), and Ala-160 contribute to the GTP site.

It belongs to the small GTPase superfamily. Arf family.

Its subcellular location is the golgi apparatus membrane. The enzyme catalyses GTP + H2O = GDP + phosphate + H(+). With respect to regulation, alternates between an inactive GDP-bound form and an active GTP-bound form. Activated by a guanine nucleotide-exchange factor (GEF) and inactivated by GTPase-activating protein (GAP). Small GTPase involved in protein trafficking between different compartments. Modulates vesicle budding and uncoating within the Golgi complex. In its GTP-bound form, triggers the recruitment of coatomer proteins to the Golgi membrane. The hydrolysis of ARF1-bound GTP, which is mediated by ARFGAPs proteins, is required for dissociation of coat proteins from Golgi membranes and vesicles. Involved in endoplasmic reticulum dynamics during embryogenesis. Also required for adult germline function. Plays a role in cell shedding during embryogenesis probably by promoting the endocytosis of cell adhesion molecules. During neurogenesis, involved in cell autonomous Q.p neuroblast asymmetric divisions that generate one precursor cell and one apoptotic cell, probably by controlling endocytosis. Plays a role in maintaining mitochondrial morphology. The chain is ADP-ribosylation factor 1-like 2 (arf-1.2) from Caenorhabditis briggsae.